The primary structure comprises 187 residues: Phosphatidylethanolamine-binding protein 1 (187 aa).

2 positions are modified to phosphoserine: Ser-6 and Ser-13. The residue at position 42 (Thr-42) is a Phosphothreonine. A phosphoserine mark is found at Ser-52 and Ser-98. An interaction with RAF1 region spans residues 93-134; it reads KGGNISSGTVLSDYVGSGPPKGTGLHRYVWLVYEQDGPLKCD.

This sequence belongs to the phosphatidylethanolamine-binding protein family. Has a tendency to form dimers by disulfide cross-linking. Interacts with RAF1 and this interaction is enhanced if RAF1 is phosphorylated on residues 'Ser-338', 'Ser-339', 'Tyr-340' and 'Tyr-341'. Interacts with ALOX15; in response to IL13/interleukin-13, prevents the interaction of PEBP1 with RAF1 to activate the ERK signaling cascade.

The protein localises to the cytoplasm. Its function is as follows. Binds ATP, opioids and phosphatidylethanolamine. Has lower affinity for phosphatidylinositol and phosphatidylcholine. Serine protease inhibitor which inhibits thrombin, neuropsin and chymotrypsin but not trypsin, tissue type plasminogen activator and elastase. Inhibits the kinase activity of RAF1 by inhibiting its activation and by dissociating the RAF1/MEK complex and acting as a competitive inhibitor of MEK phosphorylation. Functionally, HCNP may be involved in the function of the presynaptic cholinergic neurons of the central nervous system. HCNP increases the production of choline acetyltransferase but not acetylcholinesterase. Seems to be mediated by a specific receptor. The polypeptide is Phosphatidylethanolamine-binding protein 1 (PEBP1) (Oryctolagus cuniculus (Rabbit)).